Here is a 169-residue protein sequence, read N- to C-terminus: Protein kinase-interacting protein PIKP1 (169 aa).

In terms of assembly, interacts with protein kinase PK1.

Functionally, plays a role in the stimulation of the viral kinase PK1 function in very late transcription and in expression of genes required for budded virus production. This is Protein kinase-interacting protein PIKP1 (AC24) from Lepidoptera (butterflies and moths).